A 92-amino-acid polypeptide reads, in one-letter code: Large ribosomal subunit protein eL31 (92 aa).

Belongs to the eukaryotic ribosomal protein eL31 family.

This chain is Large ribosomal subunit protein eL31, found in Haloquadratum walsbyi (strain DSM 16790 / HBSQ001).